Reading from the N-terminus, the 287-residue chain is Ferredoxin-type protein NapH (287 aa).

The Cytoplasmic segment spans residues 1–29 (MANRKRDAGREALEKKGWWRSHRWLVLRR). A helical transmembrane segment spans residues 30–50 (LCQFFVLGMFLSGPWFGVWIL). Over 51–79 (HGNYSSSLLFDTVPLTDPLMTLQSLASGH) the chain is Periplasmic. Residues 80-100 (LPATVALTGAVIITVLYALAG) form a helical membrane-spanning segment. Residues 101–139 (KRLFCSWVCPLNPITDLANWLRRRFDLNQSATIPRHIRY) are Cytoplasmic-facing. A helical membrane pass occupies residues 140–160 (VLLVVILVGSALTGTLIWEWI). At 161–170 (NPVSLMGRSL) the chain is on the periplasmic side. A helical membrane pass occupies residues 171-191 (VMGFGSGALLILALFLFDLLV). Topologically, residues 192 to 287 (VEHGWCGHIC…TTRWSSGAKS (96 aa)) are cytoplasmic. 4Fe-4S ferredoxin-type domains lie at 217-247 (TVAA…APVL) and 251-280 (SPVQ…ITTR). Cys226, Cys229, Cys232, Cys236, Cys260, Cys263, Cys266, and Cys270 together coordinate [4Fe-4S] cluster.

Interacts with NapC. The cofactor is [4Fe-4S] cluster.

It is found in the cell inner membrane. In terms of biological role, required for electron transfer from ubiquinol, via NapC, to the periplasmic nitrate reductase NapAB complex. This Escherichia coli (strain K12) protein is Ferredoxin-type protein NapH (napH).